The chain runs to 408 residues: MLTDLTFIHAADLHLDSPFYGISHLPEPIFARIKESTFASVRHMIDAAVREHVDFILLAGDLFDEANRSLKAQLFLKKQFERLRECGISVYVIFGNHDHLGGEWTPIEWPENVHIFSSAVPEEKSFFKEGRRIASIYGFSYQARALMENQAARYRRSTDAPFHIGMLHGTLSGSEGHDPYCPFTHDDLVKSGMDYWALGHIHKRQVLSAEHPAVIYPGNTQARHIKETGDKGYYLVHVTNGDISYEFQRAHDVLWEKAAVDVTEAKNMTALFQMVEDTFSKLRKKGSPVCVRLVLQGTAPEWLLEAPKGTLDEFLEALQEQEAEEERFVWPLRLDDETENEANLTNLDPFFGGLFEDIDRSDLSDVLEGLERHPVYRRHADRFSQEEVKEIKEQAQIILKRQLKVLDT.

Positions 35, 61, and 96 each coordinate a divalent metal cation.

The protein belongs to the metallophosphoesterase superfamily. Requires a divalent metal cation as cofactor.

This is an uncharacterized protein from Bacillus subtilis (strain 168).